We begin with the raw amino-acid sequence, 137 residues long: Large ribosomal subunit protein uL16 (137 aa).

The protein belongs to the universal ribosomal protein uL16 family. Part of the 50S ribosomal subunit.

Binds 23S rRNA and is also seen to make contacts with the A and possibly P site tRNAs. This Spiroplasma kunkelii protein is Large ribosomal subunit protein uL16.